The following is a 293-amino-acid chain: Adenylyl-sulfate kinase 2, chloroplastic (293 aa).

A chloroplast-targeting transit peptide spans methionine 1–serine 59. Glycine 122 to threonine 130 is a binding site for ATP. Residues aspartate 152, arginine 155, arginine 169, asparagine 172, isoleucine 195–serine 196, and glycine 245 contribute to the substrate site. The active-site Phosphoserine intermediate is the serine 196.

It belongs to the APS kinase family. As to quaternary structure, interacts with APK1. As to expression, expressed in root vasculature, root tips, leaf epidermal cells and funiculus of developing seeds.

The protein resides in the plastid. Its subcellular location is the chloroplast. It carries out the reaction adenosine 5'-phosphosulfate + ATP = 3'-phosphoadenylyl sulfate + ADP + H(+). The protein operates within sulfur metabolism; hydrogen sulfide biosynthesis; sulfite from sulfate: step 2/3. Functionally, catalyzes the synthesis of activated sulfate. Essential for plant reproduction and viability. Required for the production of glucosinolates. The chain is Adenylyl-sulfate kinase 2, chloroplastic (APK2) from Arabidopsis thaliana (Mouse-ear cress).